The following is a 346-amino-acid chain: Protein NDL1 (346 aa).

This sequence belongs to the NDRG family. Interacts with GB1. Interacts with the heterodimers formed by GB1 and GG1, or GB1 and GG2. Interacts with RGS1. Expressed in root vasculature, cotyledons, leaves, petals, mature stamens and pollen grains.

The protein localises to the cytoplasm. Its function is as follows. Interacts with the heterotrimeric G protein beta subunit GB1 and plays an significant role in GB1-dependent regulation of lateral root formation. Involved in a signaling pathway that modulates root auxin transport and auxin gradients. Acts partially by positively regulating the auxin carrier PIN2 and AUX1. Acts, together with GB1 as positive regulator of meristem initiation and branching. GB1 and NDL1 positively regulate basipetal inflorescence auxin transport and modulate MAX2 expression in shoots, which regulates organ and lateral meristem formation by the establishment and maintenance of auxin gradients. The sequence is that of Protein NDL1 from Arabidopsis thaliana (Mouse-ear cress).